We begin with the raw amino-acid sequence, 210 residues long: LexA repressor (210 aa).

A DNA-binding region (H-T-H motif) is located at residues Arg31–Lys51. Catalysis depends on for autocatalytic cleavage activity residues Ser126 and Lys163.

Belongs to the peptidase S24 family. As to quaternary structure, homodimer.

It carries out the reaction Hydrolysis of Ala-|-Gly bond in repressor LexA.. Its function is as follows. Represses a number of genes involved in the response to DNA damage (SOS response), including recA and lexA. In the presence of single-stranded DNA, RecA interacts with LexA causing an autocatalytic cleavage which disrupts the DNA-binding part of LexA, leading to derepression of the SOS regulon and eventually DNA repair. This Histophilus somni (strain 129Pt) (Haemophilus somnus) protein is LexA repressor.